A 114-amino-acid chain; its full sequence is Large ribosomal subunit protein bL19 (114 aa).

Belongs to the bacterial ribosomal protein bL19 family.

In terms of biological role, this protein is located at the 30S-50S ribosomal subunit interface and may play a role in the structure and function of the aminoacyl-tRNA binding site. In Clostridium acetobutylicum (strain ATCC 824 / DSM 792 / JCM 1419 / IAM 19013 / LMG 5710 / NBRC 13948 / NRRL B-527 / VKM B-1787 / 2291 / W), this protein is Large ribosomal subunit protein bL19.